We begin with the raw amino-acid sequence, 603 residues long: Elongation factor 4 (603 aa).

A tr-type G domain is found at 2-184; the sequence is NHIRNFSIIA…AIVHKMPAPR (183 aa). GTP is bound by residues 14-19 and 131-134; these read DHGKST and NKMD.

The protein belongs to the TRAFAC class translation factor GTPase superfamily. Classic translation factor GTPase family. LepA subfamily.

It localises to the cell inner membrane. The catalysed reaction is GTP + H2O = GDP + phosphate + H(+). Required for accurate and efficient protein synthesis under certain stress conditions. May act as a fidelity factor of the translation reaction, by catalyzing a one-codon backward translocation of tRNAs on improperly translocated ribosomes. Back-translocation proceeds from a post-translocation (POST) complex to a pre-translocation (PRE) complex, thus giving elongation factor G a second chance to translocate the tRNAs correctly. Binds to ribosomes in a GTP-dependent manner. The polypeptide is Elongation factor 4 (Variovorax paradoxus (strain S110)).